We begin with the raw amino-acid sequence, 177 residues long: MAEITTIARPYAKAAFDFAIENNAVDSWAEMLNFAAMVSENETIKPLLAGGLASNKLAELFIGVCGEQVNEQGQNLLKVMAENGRLEVLPAVAQQFVELCNEWAKEIEATVVSAVELTSEQQQDISVSLEKRLARKVKLNCSIDASLVAGVIITAGDLVIDGSVRGKISRLSDTLQS.

This sequence belongs to the ATPase delta chain family. As to quaternary structure, F-type ATPases have 2 components, F(1) - the catalytic core - and F(0) - the membrane proton channel. F(1) has five subunits: alpha(3), beta(3), gamma(1), delta(1), epsilon(1). F(0) has three main subunits: a(1), b(2) and c(10-14). The alpha and beta chains form an alternating ring which encloses part of the gamma chain. F(1) is attached to F(0) by a central stalk formed by the gamma and epsilon chains, while a peripheral stalk is formed by the delta and b chains.

Its subcellular location is the cell inner membrane. Functionally, f(1)F(0) ATP synthase produces ATP from ADP in the presence of a proton or sodium gradient. F-type ATPases consist of two structural domains, F(1) containing the extramembraneous catalytic core and F(0) containing the membrane proton channel, linked together by a central stalk and a peripheral stalk. During catalysis, ATP synthesis in the catalytic domain of F(1) is coupled via a rotary mechanism of the central stalk subunits to proton translocation. In terms of biological role, this protein is part of the stalk that links CF(0) to CF(1). It either transmits conformational changes from CF(0) to CF(1) or is implicated in proton conduction. This Shewanella sediminis (strain HAW-EB3) protein is ATP synthase subunit delta.